The following is a 105-amino-acid chain: Heat shock protein HspQ (105 aa).

Belongs to the HspQ family.

The protein localises to the cytoplasm. Functionally, involved in the degradation of certain denaturated proteins, including DnaA, during heat shock stress. The chain is Heat shock protein HspQ from Blochmanniella floridana.